Reading from the N-terminus, the 503-residue chain is WD repeat-containing protein 55 homolog (503 aa).

Disordered stretches follow at residues 1–21 and 35–132; these read MHTH…DLDD and ALVG…DDLD. 3 stretches are compositionally biased toward acidic residues: residues 12–21, 40–50, and 78–96; these read DADELDDLDD, DVSDSDIDEHD, and NAED…DEAE. 6 WD repeats span residues 157 to 196, 201 to 242, 244 to 282, 285 to 324, 327 to 366, and 411 to 450; these read KLED…NKLL, VHSK…KLYE, AHDD…PIFE, EVED…LYVQ, PYEE…YHCD, and QHNM…DFGD. The disordered stretch occupies residues 483–503; it reads TKEDEDNADNNDAAAGPSNSA.

Belongs to the WD repeat WDR55 family.

The polypeptide is WD repeat-containing protein 55 homolog (Drosophila persimilis (Fruit fly)).